Here is a 145-residue protein sequence, read N- to C-terminus: Large ribosomal subunit protein uL15 (145 aa).

The tract at residues 20–54 is disordered; that stretch reads GRGMASGKGKTATRGHKGQNSRSGGGVRPGFEGGQ. Residues 42–52 are compositionally biased toward gly residues; that stretch reads SGGGVRPGFEG.

This sequence belongs to the universal ribosomal protein uL15 family. As to quaternary structure, part of the 50S ribosomal subunit.

Binds to the 23S rRNA. The sequence is that of Large ribosomal subunit protein uL15 from Mycoplasma mycoides subsp. mycoides SC (strain CCUG 32753 / NCTC 10114 / PG1).